Consider the following 337-residue polypeptide: Follistatin (337 aa).

Residues 1–22 form the signal peptide; sequence PGGVCLLLLLLCQFMEDRSAQA. The TB domain maps to 23-96; sequence GNCWLRQAKN…TCENVDCGPG (74 aa). 18 disulfide bridges follow: cysteine 25-cysteine 48, cysteine 35-cysteine 81, cysteine 49-cysteine 84, cysteine 88-cysteine 99, cysteine 93-cysteine 109, cysteine 111-cysteine 143, cysteine 115-cysteine 136, cysteine 125-cysteine 157, cysteine 161-cysteine 172, cysteine 166-cysteine 182, cysteine 185-cysteine 218, cysteine 189-cysteine 211, cysteine 200-cysteine 232, cysteine 238-cysteine 249, cysteine 243-cysteine 260, cysteine 263-cysteine 295, cysteine 267-cysteine 288, and cysteine 277-cysteine 309. The Follistatin-like 1 domain maps to 87-110; the sequence is TCENVDCGPGKKCRMNKKNKPRCV. Residues 105–159 enclose the Kazal-like 1 domain; it reads NKPRCVCAPDCSNITWKGPVCGLDGKTYRNECALLKARCKEQPELEVQYQGKCKK. N-linked (GlcNAc...) asparagine glycosylation is present at asparagine 117. The 24-residue stretch at 160-183 folds into the Follistatin-like 2 domain; the sequence is TCRDVFCPGSSTCVVDQTNNAYCV. The Kazal-like 2 domain maps to 179 to 234; it reads NAYCVTCNRICPEPTSSEQYLCGNDGVTYPSACHLRKATCLLGRSIGLAYEGKCIK. A Follistatin-like 3 domain is found at 237–261; the sequence is SCEDIQCTGGKKCLWDFKVGRGRCS. A Kazal-like 3 domain is found at 254 to 311; it reads KVGRGRCSLCGELCPESKSEEPVCASDNATYASECAMKEAACSSGVLLEVKHSGSCNS. N-linked (GlcNAc...) asparagine glycosylation is present at asparagine 281. The tract at residues 309–337 is disordered; the sequence is CNSISEDTEDEEEDEDQDYSFPISSILEW. The segment covering 314 to 326 has biased composition (acidic residues); sequence EDTEDEEEDEDQD.

Monomer.

It localises to the secreted. In terms of biological role, binds directly to activin and functions as an activin antagonist. Specific inhibitor of the biosynthesis and secretion of pituitary follicle stimulating hormone (FSH). The polypeptide is Follistatin (Ovis aries (Sheep)).